We begin with the raw amino-acid sequence, 198 residues long: Adenylate kinase (198 aa).

10–15 (GAGKGT) lines the ATP pocket. Positions 30 to 59 (STGDMLRAAVQAGSEVGKRAKAVMDAGELV) are NMP. AMP contacts are provided by residues Thr-31, Arg-36, 57 to 59 (ELV), 85 to 88 (GYPR), and Gln-92. The LID stretch occupies residues 126–142 (KRAEDAKAAGQPVRKDD). Residue Arg-127 coordinates ATP. Residues Arg-139 and Arg-150 each contribute to the AMP site. ATP is bound at residue Ala-178.

This sequence belongs to the adenylate kinase family. Monomer.

It localises to the cytoplasm. The enzyme catalyses AMP + ATP = 2 ADP. It participates in purine metabolism; AMP biosynthesis via salvage pathway; AMP from ADP: step 1/1. Its function is as follows. Catalyzes the reversible transfer of the terminal phosphate group between ATP and AMP. Plays an important role in cellular energy homeostasis and in adenine nucleotide metabolism. The polypeptide is Adenylate kinase (Mesorhizobium japonicum (strain LMG 29417 / CECT 9101 / MAFF 303099) (Mesorhizobium loti (strain MAFF 303099))).